We begin with the raw amino-acid sequence, 126 residues long: Glycine cleavage system H protein (126 aa).

A Lipoyl-binding domain is found at 24-105; sequence TLTVGITDHA…AYGVWLFKIK (82 aa). The residue at position 65 (Lys-65) is an N6-lipoyllysine.

The protein belongs to the GcvH family. As to quaternary structure, the glycine cleavage system is composed of four proteins: P, T, L and H. (R)-lipoate serves as cofactor.

The glycine cleavage system catalyzes the degradation of glycine. The H protein shuttles the methylamine group of glycine from the P protein to the T protein. This Burkholderia ambifaria (strain MC40-6) protein is Glycine cleavage system H protein.